Here is a 348-residue protein sequence, read N- to C-terminus: 3-isopropylmalate dehydrogenase (348 aa).

76-87 (GPKWTDPNNRPE) serves as a coordination point for NAD(+). Substrate is bound by residues Arg-94, Arg-104, Arg-132, and Asp-217. Asp-217, Asp-241, and Asp-245 together coordinate Mg(2+). 275-287 (GSAPDIAGKNVAN) serves as a coordination point for NAD(+).

This sequence belongs to the isocitrate and isopropylmalate dehydrogenases family. LeuB type 1 subfamily. As to quaternary structure, homodimer. Mg(2+) is required as a cofactor. Requires Mn(2+) as cofactor.

The protein localises to the cytoplasm. The catalysed reaction is (2R,3S)-3-isopropylmalate + NAD(+) = 4-methyl-2-oxopentanoate + CO2 + NADH. It functions in the pathway amino-acid biosynthesis; L-leucine biosynthesis; L-leucine from 3-methyl-2-oxobutanoate: step 3/4. Functionally, catalyzes the oxidation of 3-carboxy-2-hydroxy-4-methylpentanoate (3-isopropylmalate) to 3-carboxy-4-methyl-2-oxopentanoate. The product decarboxylates to 4-methyl-2 oxopentanoate. This chain is 3-isopropylmalate dehydrogenase, found in Staphylococcus aureus (strain NCTC 8325 / PS 47).